A 319-amino-acid chain; its full sequence is Dehydrogenase/reductase SDR family member 9 (319 aa).

The signal sequence occupies residues 1–20 (MLFWLLALLFLCAFLWNYKG). NAD(+) is bound by residues 34 to 58 (ITGC…RVIA) and D83. A substrate-binding site is contributed by S164. Y176 (proton acceptor) is an active-site residue. NAD(+) is bound at residue K180.

It belongs to the short-chain dehydrogenases/reductases (SDR) family. Homotetramer.

The protein resides in the microsome membrane. The protein localises to the endoplasmic reticulum membrane. The catalysed reaction is 3beta-hydroxy-5alpha-pregnane-20-one + NAD(+) = 5alpha-pregnane-3,20-dione + NADH + H(+). It catalyses the reaction 17beta-hydroxy-5alpha-androstan-3-one + NAD(+) = 5alpha-androstan-3,17-dione + NADH + H(+). It carries out the reaction androsterone + NAD(+) = 5alpha-androstan-3,17-dione + NADH + H(+). The enzyme catalyses 5alpha-androstane-3alpha,17beta-diol + NAD(+) = 17beta-hydroxy-5alpha-androstan-3-one + NADH + H(+). The catalysed reaction is all-trans-retinol + NAD(+) = all-trans-retinal + NADH + H(+). It catalyses the reaction 3alpha-hydroxy-5alpha-pregnan-20-one + NAD(+) = 5alpha-pregnane-3,20-dione + NADH + H(+). 3-alpha-hydroxysteroid dehydrogenase that converts 3-alpha-tetrahydroprogesterone (allopregnanolone) to dihydroxyprogesterone and 3-alpha-androstanediol to dihydroxyprogesterone. Also plays a role in the biosynthesis of retinoic acid. Can utilize both NADH and NADPH. In Mus musculus (Mouse), this protein is Dehydrogenase/reductase SDR family member 9 (Dhrs9).